Reading from the N-terminus, the 311-residue chain is Class E basic helix-loop-helix protein 22 (311 aa).

Positions alanine 22–lysine 170 are disordered. Low complexity predominate over residues glycine 81–glutamate 96. Residues alanine 125–leucine 147 are compositionally biased toward gly residues. Residues alanine 171–glutamine 225 form the bHLH domain.

The protein resides in the nucleus. Its function is as follows. May act as a transcriptional repressor. In Gallus gallus (Chicken), this protein is Class E basic helix-loop-helix protein 22 (BHLHE22).